A 100-amino-acid chain; its full sequence is Aspartyl/glutamyl-tRNA(Asn/Gln) amidotransferase subunit C (100 aa).

Belongs to the GatC family. In terms of assembly, heterotrimer of A, B and C subunits.

The enzyme catalyses L-glutamyl-tRNA(Gln) + L-glutamine + ATP + H2O = L-glutaminyl-tRNA(Gln) + L-glutamate + ADP + phosphate + H(+). The catalysed reaction is L-aspartyl-tRNA(Asn) + L-glutamine + ATP + H2O = L-asparaginyl-tRNA(Asn) + L-glutamate + ADP + phosphate + 2 H(+). Functionally, allows the formation of correctly charged Asn-tRNA(Asn) or Gln-tRNA(Gln) through the transamidation of misacylated Asp-tRNA(Asn) or Glu-tRNA(Gln) in organisms which lack either or both of asparaginyl-tRNA or glutaminyl-tRNA synthetases. The reaction takes place in the presence of glutamine and ATP through an activated phospho-Asp-tRNA(Asn) or phospho-Glu-tRNA(Gln). The protein is Aspartyl/glutamyl-tRNA(Asn/Gln) amidotransferase subunit C of Streptococcus pneumoniae serotype 19F (strain G54).